The following is a 458-amino-acid chain: Cysteine--tRNA ligase (458 aa).

Position 29 (Cys-29) interacts with Zn(2+). Positions 31–41 (MTVYDLCHLGH) match the 'HIGH' region motif. Zn(2+) contacts are provided by Cys-213, His-238, and Glu-242. The short motif at 270-274 (KMSKS) is the 'KMSKS' region element. Lys-273 serves as a coordination point for ATP.

It belongs to the class-I aminoacyl-tRNA synthetase family. Monomer. Requires Zn(2+) as cofactor.

The protein localises to the cytoplasm. The catalysed reaction is tRNA(Cys) + L-cysteine + ATP = L-cysteinyl-tRNA(Cys) + AMP + diphosphate. This chain is Cysteine--tRNA ligase, found in Acidovorax sp. (strain JS42).